The chain runs to 160 residues: Nucleotide-binding protein VC_1508 (160 aa).

It belongs to the YajQ family.

Its function is as follows. Nucleotide-binding protein. This is Nucleotide-binding protein VC_1508 from Vibrio cholerae serotype O1 (strain ATCC 39315 / El Tor Inaba N16961).